The following is a 393-amino-acid chain: Nuclear hormone receptor family member nhr-90 (393 aa).

The nuclear receptor DNA-binding region spans Leu6–His79. The NR C4-type zinc-finger motif lies at Cys9–Cys30. The NR C4-type; degenerate zinc finger occupies Cys47 to Cys62. Residues Asp121 to Thr388 form the NR LBD domain.

This sequence belongs to the nuclear hormone receptor family.

It is found in the nucleus. Orphan nuclear receptor. This chain is Nuclear hormone receptor family member nhr-90 (nhr-90), found in Caenorhabditis elegans.